The primary structure comprises 480 residues: MAESEKEAALPPKEAFSDWYNELLWMAEIMDVRYPVKGLYVWYPFGFAIRRNTYSIIREILDNSGHQETLFPLLIPENEFMKEAEHIKGFENEVYWVTHGGKDPLDIPLALRPTSETAIYPMYKKWVRSHADFPLKLYQIVNTFRYETKHTRPLIRLREITSFKEAHTVHATWEDAEAQVKEAIGLYTEIYRRLAVPVLRSRRPDWDKFPGADYTDALDAVMPDGKTLQIGTVHHLGDNFAKTFDIKYEAPDGEQRYAHQTCYGISERSIAATISIHGDDKGLVLPPEIAPVQVVIIPIIFKKGAEEVFAACKDVQERLKKAGIRVEVDASDLRPGAKYYKWEMKGVPLRLEIGPRDLQNNVAVAVRRDTGEKDQITLLEIEAGVRLKFEAIQKSLYEKAGSELESRIFDCVDLDEVKEKIQEGVATIPWCGKRECGLAMEDHIGAGILGIPLTPRSKGKEKCPACGEETETRVYVARTY.

This sequence belongs to the class-II aminoacyl-tRNA synthetase family. ProS type 3 subfamily. Homodimer.

It localises to the cytoplasm. The enzyme catalyses tRNA(Pro) + L-proline + ATP = L-prolyl-tRNA(Pro) + AMP + diphosphate. Catalyzes the attachment of proline to tRNA(Pro) in a two-step reaction: proline is first activated by ATP to form Pro-AMP and then transferred to the acceptor end of tRNA(Pro). The chain is Proline--tRNA ligase from Methanosarcina mazei (strain ATCC BAA-159 / DSM 3647 / Goe1 / Go1 / JCM 11833 / OCM 88) (Methanosarcina frisia).